We begin with the raw amino-acid sequence, 92 residues long: UPF0250 protein Pmen_3793 (92 aa).

Belongs to the UPF0250 family.

This chain is UPF0250 protein Pmen_3793, found in Ectopseudomonas mendocina (strain ymp) (Pseudomonas mendocina).